Consider the following 565-residue polypeptide: Formate--tetrahydrofolate ligase (565 aa).

Residue 65–72 (TPAGEGKT) participates in ATP binding.

This sequence belongs to the formate--tetrahydrofolate ligase family.

It catalyses the reaction (6S)-5,6,7,8-tetrahydrofolate + formate + ATP = (6R)-10-formyltetrahydrofolate + ADP + phosphate. Its pathway is one-carbon metabolism; tetrahydrofolate interconversion. The chain is Formate--tetrahydrofolate ligase from Syntrophus aciditrophicus (strain SB).